Consider the following 72-residue polypeptide: MSKEDHIEMEGKVIETLPNTTFRVQLDNGHVVIAHISGKMRKNYIRILTGDRVKVELTPYDLSKARITFRHR.

Positions 1–72 (MSKEDHIEME…SKARITFRHR (72 aa)) constitute an S1-like domain.

This sequence belongs to the IF-1 family. As to quaternary structure, component of the 30S ribosomal translation pre-initiation complex which assembles on the 30S ribosome in the order IF-2 and IF-3, IF-1 and N-formylmethionyl-tRNA(fMet); mRNA recruitment can occur at any time during PIC assembly.

The protein resides in the cytoplasm. Functionally, one of the essential components for the initiation of protein synthesis. Stabilizes the binding of IF-2 and IF-3 on the 30S subunit to which N-formylmethionyl-tRNA(fMet) subsequently binds. Helps modulate mRNA selection, yielding the 30S pre-initiation complex (PIC). Upon addition of the 50S ribosomal subunit IF-1, IF-2 and IF-3 are released leaving the mature 70S translation initiation complex. This chain is Translation initiation factor IF-1, found in Methylococcus capsulatus (strain ATCC 33009 / NCIMB 11132 / Bath).